Reading from the N-terminus, the 143-residue chain is Large ribosomal subunit protein uL11 (143 aa).

Belongs to the universal ribosomal protein uL11 family. In terms of assembly, part of the ribosomal stalk of the 50S ribosomal subunit. Interacts with L10 and the large rRNA to form the base of the stalk. L10 forms an elongated spine to which L12 dimers bind in a sequential fashion forming a multimeric L10(L12)X complex. Post-translationally, one or more lysine residues are methylated.

Its function is as follows. Forms part of the ribosomal stalk which helps the ribosome interact with GTP-bound translation factors. The sequence is that of Large ribosomal subunit protein uL11 from Cupriavidus pinatubonensis (strain JMP 134 / LMG 1197) (Cupriavidus necator (strain JMP 134)).